The primary structure comprises 294 residues: uncharacterized protein (294 aa).

The N-terminal stretch at 1-16 (MQNFMVLLLLIVAVVA) is a signal peptide. 2 N-linked (GlcNAc...) asparagine; by host glycosylation sites follow: Asn25 and Asn162.

This is an uncharacterized protein from Acheta domesticus (House cricket).